The sequence spans 577 residues: Proline--tRNA ligase (577 aa).

It belongs to the class-II aminoacyl-tRNA synthetase family. ProS type 1 subfamily. In terms of assembly, homodimer.

Its subcellular location is the cytoplasm. The catalysed reaction is tRNA(Pro) + L-proline + ATP = L-prolyl-tRNA(Pro) + AMP + diphosphate. Catalyzes the attachment of proline to tRNA(Pro) in a two-step reaction: proline is first activated by ATP to form Pro-AMP and then transferred to the acceptor end of tRNA(Pro). As ProRS can inadvertently accommodate and process non-cognate amino acids such as alanine and cysteine, to avoid such errors it has two additional distinct editing activities against alanine. One activity is designated as 'pretransfer' editing and involves the tRNA(Pro)-independent hydrolysis of activated Ala-AMP. The other activity is designated 'posttransfer' editing and involves deacylation of mischarged Ala-tRNA(Pro). The misacylated Cys-tRNA(Pro) is not edited by ProRS. In Chlamydia caviae (strain ATCC VR-813 / DSM 19441 / 03DC25 / GPIC) (Chlamydophila caviae), this protein is Proline--tRNA ligase.